Consider the following 145-residue polypeptide: Small ribosomal subunit protein uS19 (145 aa).

A2 carries the N-acetylalanine modification. A Glycyl lysine isopeptide (Lys-Gly) (interchain with G-Cter in SUMO2) cross-link involves residue K108.

Belongs to the universal ribosomal protein uS19 family. In terms of assembly, component of the small ribosomal subunit.

It localises to the cytoplasm. Its function is as follows. Component of the small ribosomal subunit. The ribosome is a large ribonucleoprotein complex responsible for the synthesis of proteins in the cell. This is Small ribosomal subunit protein uS19 (RPS15) from Bos taurus (Bovine).